The following is a 123-amino-acid chain: Non-specific lipid-transfer protein (123 aa).

The N-terminal stretch at 1-25 is a signal peptide; it reads MAVKKMVEAVFVVGLVVTMMNVWGA. Disulfide bonds link cysteine 34-cysteine 82, cysteine 44-cysteine 59, cysteine 60-cysteine 104, and cysteine 80-cysteine 119.

It belongs to the plant LTP family.

Functionally, plant non-specific lipid-transfer proteins transfer phospholipids as well as galactolipids across membranes. May play a role in wax or cutin deposition in the cell walls of expanding epidermal cells and certain secretory tissues. The sequence is that of Non-specific lipid-transfer protein from Pinus taeda (Loblolly pine).